Consider the following 209-residue polypeptide: Ribonuclease HII (209 aa).

In terms of domain architecture, RNase H type-2 spans 7–198 (GPVAGVDEAG…VAKAHQEWLH (192 aa)). Positions 13, 14, and 107 each coordinate a divalent metal cation.

This sequence belongs to the RNase HII family. The cofactor is Mn(2+). Mg(2+) serves as cofactor.

Its subcellular location is the cytoplasm. The enzyme catalyses Endonucleolytic cleavage to 5'-phosphomonoester.. Its function is as follows. Endonuclease that specifically degrades the RNA of RNA-DNA hybrids. The polypeptide is Ribonuclease HII (Corynebacterium glutamicum (strain R)).